Reading from the N-terminus, the 499-residue chain is Chaperone SurA (499 aa).

Residues 1-36 (MKRQEFALFSLTLMLSPWRRVLLPAVLAAMAGPALA) form the signal peptide. PpiC domains follow at residues 231–333 (PTEF…KLTA) and 352–450 (ITQT…QVEN).

It is found in the periplasm. The enzyme catalyses [protein]-peptidylproline (omega=180) = [protein]-peptidylproline (omega=0). Functionally, chaperone involved in the correct folding and assembly of outer membrane proteins. Recognizes specific patterns of aromatic residues and the orientation of their side chains, which are found more frequently in integral outer membrane proteins. May act in both early periplasmic and late outer membrane-associated steps of protein maturation. The polypeptide is Chaperone SurA (Cupriavidus pinatubonensis (strain JMP 134 / LMG 1197) (Cupriavidus necator (strain JMP 134))).